The sequence spans 713 residues: Calpastatin (713 aa).

2 disordered regions span residues Met1–Met187 and Asp211–Pro506. Residues Pro21 to Ala30 are compositionally biased toward basic residues. A Glycyl lysine isopeptide (Lys-Gly) (interchain with G-Cter in SUMO2) cross-link involves residue Lys32. Basic and acidic residues predominate over residues Val46–Pro63. Lys50 is modified (N6-acetyllysine). Residues Ser85–Glu94 show a composition bias toward polar residues. 2 positions are modified to phosphoserine: Ser87 and Ser134. Thr136 is subject to Phosphothreonine. One copy of the Inhibitory domain 1 repeat lies at Thr171–Thr223. Ser244 is subject to Phosphoserine. Composition is skewed to basic and acidic residues over residues Asp248–Thr258, Arg304–Gly332, and Tyr342–Ser367. The Inhibitory domain 2 repeat unit spans residues Glu307–Ala359. A phosphoserine mark is found at Ser367, Ser369, and Ser376. Over residues Glu370–Phe379 the composition is skewed to acidic residues. Over residues Asp380–Glu397 the composition is skewed to basic and acidic residues. A Phosphoserine modification is found at Ser441. Residues Gly443 to Glu502 show a composition bias toward basic and acidic residues. Residues Ala447–Pro500 form an Inhibitory domain 3 repeat. Phosphoserine occurs at positions 517 and 528. Residues Ser536 to Ser713 form a disordered region. A compositionally biased stretch (polar residues) spans Val542–Ser553. Phosphoserine occurs at positions 575 and 577. The Inhibitory domain 4 repeat unit spans residues Pro583 to Lys636. 2 stretches are compositionally biased toward basic and acidic residues: residues Pro583–Ala646 and Lys691–Ser713.

The protein belongs to the protease inhibitor I27 (calpastatin) family.

Specific inhibition of calpain (calcium-dependent cysteine protease). Plays a key role in postmortem tenderization of meat and have been proposed to be involved in muscle protein degradation in living tissue. This Sus scrofa (Pig) protein is Calpastatin (CAST).